The following is a 445-amino-acid chain: Oxysterols receptor LXR-alpha (445 aa).

2 disordered regions span residues 1 to 34 (MSLW…QGGN) and 63 to 86 (ALLP…KKGP). Residues 1–94 (MSLWLEASMP…GPAPKMLGNE (94 aa)) form a transactivation AF-1; required for ligand-independent transactivation function region. The segment at residues 93-168 (NELCSVCGDK…AGMREECVLS (76 aa)) is a DNA-binding region (nuclear receptor). NR C4-type zinc fingers lie at residues 96–116 (CSVC…CEGC) and 132–156 (CHSG…LRKC). A Phosphoserine modification is found at S191. A transactivation AF-2; required for ligand-dependent transactivation function; mediates interaction with CCAR2 region spans residues 203-445 (QLSPEQLGMI…LLSEIWDVHE (243 aa)). In terms of domain architecture, NR LBD spans 207–445 (EQLGMIEKLV…LLSEIWDVHE (239 aa)).

Belongs to the nuclear hormone receptor family. NR1 subfamily. Heterodimer of NR1H3 and RXR (retinoic acid receptor). Interacts with CCAR2 (via N-terminus) in a ligand-independent manner. Interacts with SIRT1 and this interaction is inhibited by CCAR2. Ubiquitinated. Ubiquitination by UBR5 leads to its degradation: UBR5 specifically recognizes and binds ligand-bound NR1H3 when it is not associated with coactivators (NCOAs). In presence of NCOAs, the UBR5-degron is not accessible, preventing its ubiquitination and degradation.

Its subcellular location is the nucleus. The protein resides in the cytoplasm. Its function is as follows. Nuclear receptor that exhibits a ligand-dependent transcriptional activation activity. Interaction with retinoic acid receptor (RXR) shifts RXR from its role as a silent DNA-binding partner to an active ligand-binding subunit in mediating retinoid responses through target genes defined by LXRES. LXRES are DR4-type response elements characterized by direct repeats of two similar hexanuclotide half-sites spaced by four nucleotides. Plays an important role in the regulation of cholesterol homeostasis, regulating cholesterol uptake through MYLIP-dependent ubiquitination of LDLR, VLDLR and LRP8. Interplays functionally with RORA for the regulation of genes involved in liver metabolism. Induces LPCAT3-dependent phospholipid remodeling in endoplasmic reticulum (ER) membranes of hepatocytes, driving SREBF1 processing and lipogenesis. Via LPCAT3, triggers the incorporation of arachidonate into phosphatidylcholines of ER membranes, increasing membrane dynamics and enabling triacylglycerols transfer to nascent very low-density lipoprotein (VLDL) particles. Via LPCAT3 also counteracts lipid-induced ER stress response and inflammation, likely by modulating SRC kinase membrane compartmentalization and limiting the synthesis of lipid inflammatory mediators. The sequence is that of Oxysterols receptor LXR-alpha (Nr1h3) from Mus musculus (Mouse).